The primary structure comprises 386 residues: Acyl-CoA ligase lcsD (386 aa).

Residues 62–132 (ELEQTLLAIQ…ELLPACKIIQ (71 aa)) form an SBD1 region. Residue 107–115 (AVGASGISK) coordinates ATP. The interval 133–195 (GYGMTETTGV…LRSPSVVIGY (63 aa)) is SBD2. Threonine 137 contributes to the substrate binding site. ATP-binding residues include aspartate 216 and arginine 235. Residues 243 to 245 (RGL) and 313 to 316 (HLDG) contribute to the CoA site. Lysine 331 provides a ligand contact to ATP. The interval 352–386 (REKAANGVHKVHVNGVKRPEKMEVFDLSSDDEDDD) is disordered.

It belongs to the ATP-dependent AMP-binding enzyme family.

The protein operates within secondary metabolite biosynthesis. Functionally, acyl-CoA ligase; part of the gene cluster that mediates the biosynthesis of the lipopeptide antibiotics leucinostatins that show extensive biological activities, including antimalarial, antiviral, antibacterial, antifungal, and antitumor activities, as well as phytotoxic. Leucinostatin A contains nine amino acid residues, including the unusual amino acid 4-methyl-L-proline (MePro), 2-amino-6-hydroxy-4-methyl-8-oxodecanoic acid (AHyMeOA), 3-hydroxyleucine (HyLeu), alpha-aminoisobutyric acid (AIB), beta-Ala, a 4-methylhex-2-enoic acid at the N-terminus as well as a N1,N1-dimethylpropane-1,2-diamine (DPD) at the C-terminus. The biosynthesis of leucinostatins is probably initiated with the assembly of 4-methylhex-2-enoic acid by a reducing PKS. Two reducing polyketide synthases, lcsB and lcsC, have been identified in the cluster and it is not clear which is the one that assembles 4-methylhex-2-enoic acid since both contain KS, AT, DH, cMT, ER, KR and ACP domains. The polyketide residue might be transferred to the NRPS lcsA, mediated by two additional enzymes, the acyl-CoA ligase lcsD and the thioesterase lcsE. The linear polyketide carboxylic acid, which is released from PKS, is converted to a CoA thioester by lcsD, and then lcsE hydrolyzes the thiol bond and shuttles the polyketide intermediate to lcsA. The C domain of the first module catalyzed the condensation of 4-methylhex-2-enoic acid and MePro carried by domain A1, followed by successive condensations of nine amino acids to trigger the elongation of the linear peptide. A5 and A6 domains of lcsA are proposed to incorporate leucine, A2 AHyMeOA, and A3 incorporates HyLeu. A4, A7 and A8 incorporate AIB. The AHyMeOA in leucinostatin A activated by the A2 might be produced by the second PKS (lcsB or lcsC) present within the cluster. The MePro is probably produced via leucine cyclization and may originate from a separate pathway, independent of the cluster. Another nonproteinogenic amino acid, beta-Ala, could be produced by an aspartic acid decarboxylase also localized outside of the cluster. Two candidates are VFPBJ_01400 and VFPBJ_10476. The final peptide scaffold may be released by the NAD(P)H-dependent thioester reductase (TE) at the C-terminal region of lcsA. Transamination of the lcsA product by the transaminase lcsP may produce DPD at the C-terminus. Further hydroxylation steps performed alternatively by the cytochrome P450 monooxygenases lcsI, lcsK and lcsN then yield the non-methylated leucinostatins precursor. It is also possible that leucines can be hydroxylated prior to their incorporation into the peptide. Varying extents of methylation then lead to the formation of leucinostatins A and B. The chain is Acyl-CoA ligase lcsD from Purpureocillium lilacinum (Paecilomyces lilacinus).